Consider the following 405-residue polypeptide: Angiopoietin-related protein 4 (405 aa).

Positions 1-23 (MRCAPTAGAALVLCAATAGLLSA) are cleaved as a signal peptide. Residues 54 to 146 (GLREHVERTR…QNLQSQIDLL (93 aa)) adopt a coiled-coil conformation. N-linked (GlcNAc...) asparagine glycosylation occurs at asparagine 176. One can recognise a Fibrinogen C-terminal domain in the interval 178–400 (TRLHRPPRDC…ATTLLIQPME (223 aa)). A disulfide bridge links cysteine 187 with cysteine 215. N-linked (GlcNAc...) asparagine glycans are attached at residues asparagine 231 and asparagine 237. Cysteines 340 and 353 form a disulfide.

In terms of assembly, homooligomer; disulfide-linked via Cys residues in the N-terminal part of the protein. The homooligomer undergoes proteolytic processing to release its carboxyl fibrinogen-like domain, which circulates as a monomer. The homooligomer unprocessed form is able to interact with the extracellular matrix. Post-translationally, N-glycosylated. In terms of processing, forms disulfide-linked dimers and tetramers. Cleaved into a smaller N-terminal chain and a larger chain that contains the fibrinogen C-terminal domain; both cleaved and uncleaved forms are detected in the extracellular space. The cleaved form is not present within the cell.

The protein localises to the secreted. It localises to the extracellular space. It is found in the extracellular matrix. Its function is as follows. Mediates inactivation of the lipoprotein lipase LPL, and thereby plays a role in the regulation of triglyceride clearance from the blood serum and in lipid metabolism. May also play a role in regulating glucose homeostasis and insulin sensitivity. Inhibits proliferation, migration, and tubule formation of endothelial cells and reduces vascular leakage. Upon heterologous expression, inhibits the adhesion of endothelial cell to the extracellular matrix (ECM), and inhibits the reorganization of the actin cytoskeleton, formation of actin stress fibers and focal adhesions in endothelial cells that have adhered to ANGPTL4-containing ECM (in vitro). Depending on context, may modulate tumor-related angiogenesis. Functionally, mediates inactivation of the lipoprotein lipase LPL, and thereby plays an important role in the regulation of triglyceride clearance from the blood serum and in lipid metabolism. Has higher activity in LPL inactivation than the uncleaved protein. The chain is Angiopoietin-related protein 4 (Angptl4) from Rattus norvegicus (Rat).